Reading from the N-terminus, the 481-residue chain is Argininosuccinate lyase (481 aa).

It belongs to the lyase 1 family. Argininosuccinate lyase subfamily.

The protein resides in the cytoplasm. It carries out the reaction 2-(N(omega)-L-arginino)succinate = fumarate + L-arginine. It participates in amino-acid biosynthesis; L-arginine biosynthesis; L-arginine from L-ornithine and carbamoyl phosphate: step 3/3. In Kineococcus radiotolerans (strain ATCC BAA-149 / DSM 14245 / SRS30216), this protein is Argininosuccinate lyase.